The primary structure comprises 181 residues: Small acidic protein (181 aa).

The disordered stretch occupies residues 1 to 181; sequence MSAARESHPH…KMMFVKSSGS (181 aa). Lysine 13 is covalently cross-linked (Glycyl lysine isopeptide (Lys-Gly) (interchain with G-Cter in SUMO2)). Phosphoserine is present on residues serine 15 and serine 17. Over residues 48–78 the composition is skewed to basic and acidic residues; sequence GKKEHTGRLVIGDHKSTSHFRTGEEDKKINE. A Glycyl lysine isopeptide (Lys-Gly) (interchain with G-Cter in SUMO2) cross-link involves residue lysine 62. A Phosphoserine modification is found at serine 63. A Glycyl lysine isopeptide (Lys-Gly) (interchain with G-Cter in SUMO2) cross-link involves residue lysine 75. Residues serine 87, serine 125, and serine 145 each carry the phosphoserine modification. Residues 106 to 147 show a composition bias toward acidic residues; the sequence is EVDDHDGEGDVAGDDDDDDSPDPESPDDSESDSESEKEESTE. Basic and acidic residues predominate over residues 151–169; that stretch reads AAEHPDEVEDSKNKKDAKS. An N6-acetyllysine mark is found at lysine 172 and lysine 177.

It belongs to the SMAP family.

This Bos taurus (Bovine) protein is Small acidic protein (SMAP).